Reading from the N-terminus, the 292-residue chain is Phosphatidylserine decarboxylase proenzyme (292 aa).

Catalysis depends on charge relay system; for autoendoproteolytic cleavage activity residues D98, H153, and S254. S254 (schiff-base intermediate with substrate; via pyruvic acid; for decarboxylase activity) is an active-site residue. S254 is modified (pyruvic acid (Ser); by autocatalysis).

It belongs to the phosphatidylserine decarboxylase family. PSD-B subfamily. Prokaryotic type I sub-subfamily. As to quaternary structure, heterodimer of a large membrane-associated beta subunit and a small pyruvoyl-containing alpha subunit. Requires pyruvate as cofactor. In terms of processing, is synthesized initially as an inactive proenzyme. Formation of the active enzyme involves a self-maturation process in which the active site pyruvoyl group is generated from an internal serine residue via an autocatalytic post-translational modification. Two non-identical subunits are generated from the proenzyme in this reaction, and the pyruvate is formed at the N-terminus of the alpha chain, which is derived from the carboxyl end of the proenzyme. The autoendoproteolytic cleavage occurs by a canonical serine protease mechanism, in which the side chain hydroxyl group of the serine supplies its oxygen atom to form the C-terminus of the beta chain, while the remainder of the serine residue undergoes an oxidative deamination to produce ammonia and the pyruvoyl prosthetic group on the alpha chain. During this reaction, the Ser that is part of the protease active site of the proenzyme becomes the pyruvoyl prosthetic group, which constitutes an essential element of the active site of the mature decarboxylase.

The protein resides in the cell membrane. It carries out the reaction a 1,2-diacyl-sn-glycero-3-phospho-L-serine + H(+) = a 1,2-diacyl-sn-glycero-3-phosphoethanolamine + CO2. The protein operates within phospholipid metabolism; phosphatidylethanolamine biosynthesis; phosphatidylethanolamine from CDP-diacylglycerol: step 2/2. Its function is as follows. Catalyzes the formation of phosphatidylethanolamine (PtdEtn) from phosphatidylserine (PtdSer). This is Phosphatidylserine decarboxylase proenzyme from Halorhodospira halophila (strain DSM 244 / SL1) (Ectothiorhodospira halophila (strain DSM 244 / SL1)).